The chain runs to 367 residues: Ribosomal RNA large subunit methyltransferase M (367 aa).

Residues S188, 221-224 (CPGG), D240, D260, and D277 each bind S-adenosyl-L-methionine. Catalysis depends on K306, which acts as the Proton acceptor.

The protein belongs to the class I-like SAM-binding methyltransferase superfamily. RNA methyltransferase RlmE family. RlmM subfamily. As to quaternary structure, monomer.

The protein localises to the cytoplasm. The catalysed reaction is cytidine(2498) in 23S rRNA + S-adenosyl-L-methionine = 2'-O-methylcytidine(2498) in 23S rRNA + S-adenosyl-L-homocysteine + H(+). Its function is as follows. Catalyzes the 2'-O-methylation at nucleotide C2498 in 23S rRNA. This Serratia proteamaculans (strain 568) protein is Ribosomal RNA large subunit methyltransferase M.